Consider the following 308-residue polypeptide: Ornithine carbamoyltransferase (308 aa).

Residues 56–59, glutamine 83, arginine 107, and 134–137 contribute to the carbamoyl phosphate site; these read STRT and HPCQ. Residues asparagine 165, aspartate 225, and 229–230 each bind L-ornithine; that span reads SM. Carbamoyl phosphate contacts are provided by residues 266-267 and arginine 294; that span reads CL.

The protein belongs to the aspartate/ornithine carbamoyltransferase superfamily. OTCase family.

It localises to the cytoplasm. It carries out the reaction carbamoyl phosphate + L-ornithine = L-citrulline + phosphate + H(+). It participates in amino-acid biosynthesis; L-arginine biosynthesis; L-arginine from L-ornithine and carbamoyl phosphate: step 1/3. Functionally, reversibly catalyzes the transfer of the carbamoyl group from carbamoyl phosphate (CP) to the N(epsilon) atom of ornithine (ORN) to produce L-citrulline. In Cereibacter sphaeroides (strain ATCC 17023 / DSM 158 / JCM 6121 / CCUG 31486 / LMG 2827 / NBRC 12203 / NCIMB 8253 / ATH 2.4.1.) (Rhodobacter sphaeroides), this protein is Ornithine carbamoyltransferase.